The chain runs to 173 residues: Avenin-like a5 (173 aa).

The N-terminal stretch at 1–19 (MKTMLILALIALAATSVVA) is a signal peptide.

Belongs to the prolamin family. Post-translationally, contains 7 disulfide bonds.

Its function is as follows. Seed storage protein. Not integrated in the gluten polymer through disulfide bonds, unless incorporated by reduction and reoxidation during dough making. Increases dough strength and bread volume, but decreases dough stability when added into a base wheat flour. This is Avenin-like a5 from Triticum aestivum (Wheat).